The sequence spans 838 residues: Kinesin-like protein KIFC2 (838 aa).

The span at 23 to 32 (AAAAEPGDPA) shows a compositional bias: low complexity. Disordered stretches follow at residues 23 to 48 (AAAA…DLPA) and 140 to 185 (LLQG…GQQP). The segment covering 156 to 167 (DGSTSQEESPSH) has biased composition (polar residues). Residues 186-351 (LQLEEDQRAW…SLRQGCGDLR (166 aa)) are a coiled coil. One can recognise a Kinesin motor domain in the interval 409 to 740 (NIRVLCRLRP…ARRSPRGRRI (332 aa)). Position 484-491 (484-491 (GQTGTGKT)) interacts with ATP. The disordered stretch occupies residues 718-792 (RSPPTRARPP…SPGPPAPLRR (75 aa)).

Belongs to the TRAFAC class myosin-kinesin ATPase superfamily. Kinesin family.

It localises to the cytoplasm. The protein localises to the cytoskeleton. Its function is as follows. May play a role in microtubule-dependent retrograde axonal transport. May function as the motor for the transport of multivesicular body (MVB)-like organelles in dendrites. The sequence is that of Kinesin-like protein KIFC2 (KIFC2) from Homo sapiens (Human).